We begin with the raw amino-acid sequence, 487 residues long: Homeobox protein homothorax (487 aa).

Disordered stretches follow at residues 25-49 (YDPH…HMTH), 210-292 (DTTK…SSLN), and 333-369 (NFGT…QKKR). An MEIS N-terminal domain is found at 127-211 (GGDVCSSESF…IDLVIDERDT (85 aa)). Polar residues-rich tracts occupy residues 227–237 (NADSTSHTDGA) and 333–345 (NFGT…ASNA). The segment at residues 365–427 (NQKKRGIFPK…NARRRIVQPM (63 aa)) is a DNA-binding region (homeobox; TALE-type).

Belongs to the TALE/MEIS homeobox family. Interacts with exd; required for nuclear translocation of exd. As to expression, in the wing disk, the expression is present in the regions corresponding to notum, wing hinge and ventral pleura. In the leg disk, the expression is in the periphery region, corresponding to the proximal segments of the legs. In the antennal disk, the expression is in all but the arista region. In the eye disk, the expression is strong in the anterior region surrounding the eye field, including the regions corresponding to ptilinum, ocellus and head capsules, and weak in the posterior and lateral margins of the eye disk. Expressed specifically in maturating inner photoreceptors of the DRA and maintained through adulthood.

It localises to the nucleus. All isoforms are required for patterning of the embryonic cuticle. Acts with exd to delimit the eye field and prevent inappropriate eye development. Isoforms that carry the homeodomain are required for proper localization of chordotonal organs within the peripheral nervous system and antennal identity; required to activate antennal-specific genes, such as sal and to repress the leg-like expression of dac. Necessary for the nuclear localization of the essential HOX cofactor, extradenticle (exd). Both necessary and sufficient for inner photoreceptors to adopt the polarization-sensitive 'dorsal rim area' (DRA) of the eye fate instead of the color-sensitive default state. This occurs by increasing rhabdomere size and uncoupling R7-R8 communication to allow both cells to express the same opsin rather than different ones as required for color vision. The polypeptide is Homeobox protein homothorax (Drosophila melanogaster (Fruit fly)).